The following is a 108-amino-acid chain: ATP synthase epsilon chain (108 aa).

The protein belongs to the ATPase epsilon chain family. In terms of assembly, F-type ATPases have 2 components, CF(1) - the catalytic core - and CF(0) - the membrane proton channel. CF(1) has five subunits: alpha(3), beta(3), gamma(1), delta(1), epsilon(1). CF(0) has three main subunits: a, b and c.

The protein resides in the cell inner membrane. Its function is as follows. Produces ATP from ADP in the presence of a proton gradient across the membrane. This is ATP synthase epsilon chain from Thermotoga maritima (strain ATCC 43589 / DSM 3109 / JCM 10099 / NBRC 100826 / MSB8).